Reading from the N-terminus, the 263-residue chain is Acetylglutamate kinase (263 aa).

Substrate is bound by residues 48 to 49 (GG), arginine 70, and asparagine 162.

Belongs to the acetylglutamate kinase family. ArgB subfamily.

The protein resides in the cytoplasm. The enzyme catalyses N-acetyl-L-glutamate + ATP = N-acetyl-L-glutamyl 5-phosphate + ADP. Its pathway is amino-acid biosynthesis; L-arginine biosynthesis; N(2)-acetyl-L-ornithine from L-glutamate: step 2/4. Functionally, catalyzes the ATP-dependent phosphorylation of N-acetyl-L-glutamate. The sequence is that of Acetylglutamate kinase from Vibrio campbellii (strain ATCC BAA-1116).